The sequence spans 153 residues: LWWLYRDNLLPKPTKFCGYARSKLTTADIRKACEKFMKVQPHEQQRYEEFWELNHYVSGSYDGRLGFEMLQQQMEIMENKGVANRVFYLALPPSVFNSVTVRIKEICLSKKGWNRVIIEKPFGRDDVTSKQLSDHLASLFDEEQIYRIDHYLG.

NADP(+) is bound by residues arginine 21 and lysine 120. Lysine 120 is a binding site for D-glucose 6-phosphate.

This sequence belongs to the glucose-6-phosphate dehydrogenase family.

The protein localises to the cytoplasm. It is found in the cytosol. The catalysed reaction is D-glucose 6-phosphate + NADP(+) = 6-phospho-D-glucono-1,5-lactone + NADPH + H(+). Its pathway is carbohydrate degradation; pentose phosphate pathway; D-ribulose 5-phosphate from D-glucose 6-phosphate (oxidative stage): step 1/3. Functionally, cytosolic glucose-6-phosphate dehydrogenase that catalyzes the first and rate-limiting step of the oxidative branch within the pentose phosphate pathway/shunt, an alternative route to glycolysis for the dissimilation of carbohydrates and a major source of reducing power and metabolic intermediates for fatty acid and nucleic acid biosynthetic processes. This Sarcophaga bullata (Grey flesh fly) protein is Glucose-6-phosphate 1-dehydrogenase (ZW).